A 114-amino-acid chain; its full sequence is SCP2 domain-containing protein YusD (114 aa).

Positions asparagine 21 to leucine 101 constitute an SCP2 domain.

This chain is SCP2 domain-containing protein YusD (yusD), found in Bacillus subtilis (strain 168).